Here is a 372-residue protein sequence, read N- to C-terminus: Aminomethyltransferase (372 aa).

Belongs to the GcvT family. The glycine cleavage system is composed of four proteins: P, T, L and H.

It catalyses the reaction N(6)-[(R)-S(8)-aminomethyldihydrolipoyl]-L-lysyl-[protein] + (6S)-5,6,7,8-tetrahydrofolate = N(6)-[(R)-dihydrolipoyl]-L-lysyl-[protein] + (6R)-5,10-methylene-5,6,7,8-tetrahydrofolate + NH4(+). Functionally, the glycine cleavage system catalyzes the degradation of glycine. The protein is Aminomethyltransferase of Synechocystis sp. (strain ATCC 27184 / PCC 6803 / Kazusa).